The following is a 529-amino-acid chain: Na(+)/H(+) antiporter NhaB (529 aa).

The next 12 membrane-spanning stretches (helical) occupy residues 13–33 (FLGK…IINP), 34–54 (IVFF…EFIF), 90–110 (LVAN…IYFM), 113–133 (LLLF…ILSL), 136–156 (CFAA…AVVI), 205–225 (LLMH…VGEP), 241–261 (FLIR…LTCF), 306–326 (GLIA…VGLI), 327–347 (GLSV…HSLG), 351–371 (EEAL…AVII), 451–471 (ATPN…APLI), and 479–499 (VIMA…GIVF).

This sequence belongs to the NhaB Na(+)/H(+) (TC 2.A.34) antiporter family.

The protein resides in the cell inner membrane. The catalysed reaction is 2 Na(+)(in) + 3 H(+)(out) = 2 Na(+)(out) + 3 H(+)(in). Functionally, na(+)/H(+) antiporter that extrudes sodium in exchange for external protons. The polypeptide is Na(+)/H(+) antiporter NhaB (Vibrio vulnificus (strain CMCP6)).